The primary structure comprises 557 residues: Laccase-11 (557 aa).

Positions 1-23 are cleaved as a signal peptide; the sequence is MKMGFLFLFCYLLAFLGYSPVDA. 2 Plastocyanin-like domains span residues 31–147 and 158–308; these read DVQV…PAPG and ESNI…YKGV. 3 N-linked (GlcNAc...) asparagine glycosylation sites follow: asparagine 36, asparagine 69, and asparagine 77. The Cu cation site is built by histidine 81 and histidine 83. Asparagine 115 carries an N-linked (GlcNAc...) asparagine glycan. Residues histidine 126 and histidine 128 each contribute to the Cu cation site. N-linked (GlcNAc...) asparagine glycans are attached at residues asparagine 240, asparagine 296, asparagine 323, asparagine 371, asparagine 381, asparagine 398, asparagine 416, and asparagine 440. Residues 406 to 541 form the Plastocyanin-like 3 domain; it reads DFPDRPPKAF…KMAFVVENGE (136 aa). Cu cation is bound by residues histidine 458, histidine 461, histidine 463, histidine 520, cysteine 521, histidine 522, and histidine 526.

This sequence belongs to the multicopper oxidase family. The cofactor is Cu cation. As to expression, ubiquitous and constitutive.

The protein resides in the secreted. Its subcellular location is the extracellular space. The protein localises to the apoplast. The catalysed reaction is 4 hydroquinone + O2 = 4 benzosemiquinone + 2 H2O. Functionally, lignin degradation and detoxification of lignin-derived products. The chain is Laccase-11 (LAC11) from Arabidopsis thaliana (Mouse-ear cress).